Consider the following 66-residue polypeptide: Cold shock protein CspD (66 aa).

In terms of domain architecture, CSD spans Gly-4–Val-63.

The protein resides in the cytoplasm. The protein is Cold shock protein CspD (cspD) of Bacillus subtilis (strain 168).